Reading from the N-terminus, the 249-residue chain is 2,3-bisphosphoglycerate-dependent phosphoglycerate mutase (249 aa).

Residues Arg-8–Asn-15, Thr-21–Gly-22, Arg-60, Glu-87–Tyr-90, Lys-98, Arg-114–Arg-115, and Gly-183–Asn-184 contribute to the substrate site. Residue His-9 is the Tele-phosphohistidine intermediate of the active site. The active-site Proton donor/acceptor is Glu-87.

This sequence belongs to the phosphoglycerate mutase family. BPG-dependent PGAM subfamily.

It carries out the reaction (2R)-2-phosphoglycerate = (2R)-3-phosphoglycerate. It participates in carbohydrate degradation; glycolysis; pyruvate from D-glyceraldehyde 3-phosphate: step 3/5. Catalyzes the interconversion of 2-phosphoglycerate and 3-phosphoglycerate. In Caldanaerobacter subterraneus subsp. tengcongensis (strain DSM 15242 / JCM 11007 / NBRC 100824 / MB4) (Thermoanaerobacter tengcongensis), this protein is 2,3-bisphosphoglycerate-dependent phosphoglycerate mutase.